A 396-amino-acid polypeptide reads, in one-letter code: tRNA (guanine-N(7)-)-methyltransferase (396 aa).

Positions 125, 150, and 177 each coordinate S-adenosyl-L-methionine. The substrate site is built by lysine 203 and aspartate 233.

Belongs to the class I-like SAM-binding methyltransferase superfamily. TrmB family.

It carries out the reaction guanosine(46) in tRNA + S-adenosyl-L-methionine = N(7)-methylguanosine(46) in tRNA + S-adenosyl-L-homocysteine. The protein operates within tRNA modification; N(7)-methylguanine-tRNA biosynthesis. Its function is as follows. Catalyzes the formation of N(7)-methylguanine at position 46 (m7G46) in tRNA. The protein is tRNA (guanine-N(7)-)-methyltransferase of Helicobacter hepaticus (strain ATCC 51449 / 3B1).